A 155-amino-acid chain; its full sequence is 6,7-dimethyl-8-ribityllumazine synthase (155 aa).

Residues Phe26, 60 to 62, and 84 to 86 contribute to the 5-amino-6-(D-ribitylamino)uracil site; these read ALE and AVI. A (2S)-2-hydroxy-3-oxobutyl phosphate-binding site is contributed by 89-90; it reads ET. His92 acts as the Proton donor in catalysis. Asn117 contributes to the 5-amino-6-(D-ribitylamino)uracil binding site. Arg131 is a (2S)-2-hydroxy-3-oxobutyl phosphate binding site.

This sequence belongs to the DMRL synthase family.

The catalysed reaction is (2S)-2-hydroxy-3-oxobutyl phosphate + 5-amino-6-(D-ribitylamino)uracil = 6,7-dimethyl-8-(1-D-ribityl)lumazine + phosphate + 2 H2O + H(+). It functions in the pathway cofactor biosynthesis; riboflavin biosynthesis; riboflavin from 2-hydroxy-3-oxobutyl phosphate and 5-amino-6-(D-ribitylamino)uracil: step 1/2. Functionally, catalyzes the formation of 6,7-dimethyl-8-ribityllumazine by condensation of 5-amino-6-(D-ribitylamino)uracil with 3,4-dihydroxy-2-butanone 4-phosphate. This is the penultimate step in the biosynthesis of riboflavin. The chain is 6,7-dimethyl-8-ribityllumazine synthase from Chromobacterium violaceum (strain ATCC 12472 / DSM 30191 / JCM 1249 / CCUG 213 / NBRC 12614 / NCIMB 9131 / NCTC 9757 / MK).